The primary structure comprises 1072 residues: Carbamoyl phosphate synthase large chain (1072 aa).

Positions 1–401 are carboxyphosphate synthetic domain; the sequence is MPKRLDINTI…SLLKAVRSLE (401 aa). 12 residues coordinate ATP: R129, R169, G175, G176, K208, I210, E215, G241, V242, H243, Q284, and E298. Positions 133-327 constitute an ATP-grasp 1 domain; the sequence is RTLMQDLNEP…IAKLAAKIAV (195 aa). Residues Q284, E298, and N300 each coordinate Mg(2+). The Mn(2+) site is built by Q284, E298, and N300. Residues 402-546 are oligomerization domain; that stretch reads LGIYHLELDH…YSTYADENES (145 aa). The carbamoyl phosphate synthetic domain stretch occupies residues 547-929; the sequence is IVTDRKSVVV…ALYKGLVASG (383 aa). The 191-residue stretch at 671-861 folds into the ATP-grasp 2 domain; it reads EAALTKLGIP…MANVATKVIL (191 aa). 9 residues coordinate ATP: R707, R746, E752, G777, V778, H779, S780, Q820, and E832. Mg(2+) is bound by residues Q820, E832, and N834. Mn(2+) contacts are provided by Q820, E832, and N834. The MGS-like domain maps to 930-1072; sequence INIPTHGSVI…QTKRHEVVHA (143 aa). Residues 930-1072 form an allosteric domain region; it reads INIPTHGSVI…QTKRHEVVHA (143 aa).

The protein belongs to the CarB family. Composed of two chains; the small (or glutamine) chain promotes the hydrolysis of glutamine to ammonia, which is used by the large (or ammonia) chain to synthesize carbamoyl phosphate. Tetramer of heterodimers (alpha,beta)4. It depends on Mg(2+) as a cofactor. Mn(2+) serves as cofactor.

The catalysed reaction is hydrogencarbonate + L-glutamine + 2 ATP + H2O = carbamoyl phosphate + L-glutamate + 2 ADP + phosphate + 2 H(+). It catalyses the reaction hydrogencarbonate + NH4(+) + 2 ATP = carbamoyl phosphate + 2 ADP + phosphate + 2 H(+). Its pathway is amino-acid biosynthesis; L-arginine biosynthesis; carbamoyl phosphate from bicarbonate: step 1/1. The protein operates within pyrimidine metabolism; UMP biosynthesis via de novo pathway; (S)-dihydroorotate from bicarbonate: step 1/3. In terms of biological role, large subunit of the glutamine-dependent carbamoyl phosphate synthetase (CPSase). CPSase catalyzes the formation of carbamoyl phosphate from the ammonia moiety of glutamine, carbonate, and phosphate donated by ATP, constituting the first step of 2 biosynthetic pathways, one leading to arginine and/or urea and the other to pyrimidine nucleotides. The large subunit (synthetase) binds the substrates ammonia (free or transferred from glutamine from the small subunit), hydrogencarbonate and ATP and carries out an ATP-coupled ligase reaction, activating hydrogencarbonate by forming carboxy phosphate which reacts with ammonia to form carbamoyl phosphate. The chain is Carbamoyl phosphate synthase large chain from Bacillus cereus (strain AH187).